A 542-amino-acid polypeptide reads, in one-letter code: Chaperonin GroEL (542 aa).

ATP contacts are provided by residues 29-32 (TLGP), 86-90 (DGTTT), G413, 476-478 (NAA), and D492. Positions 523-542 (EPAAPAMPGGMDPSMMGGMM) are disordered. Positions 526–542 (APAMPGGMDPSMMGGMM) are enriched in low complexity.

It belongs to the chaperonin (HSP60) family. Forms a cylinder of 14 subunits composed of two heptameric rings stacked back-to-back. Interacts with the co-chaperonin GroES.

The protein localises to the cytoplasm. It carries out the reaction ATP + H2O + a folded polypeptide = ADP + phosphate + an unfolded polypeptide.. Functionally, together with its co-chaperonin GroES, plays an essential role in assisting protein folding. The GroEL-GroES system forms a nano-cage that allows encapsulation of the non-native substrate proteins and provides a physical environment optimized to promote and accelerate protein folding. The chain is Chaperonin GroEL from Streptococcus uberis (strain ATCC BAA-854 / 0140J).